Reading from the N-terminus, the 443-residue chain is Endonuclease CUE2 (443 aa).

CUE domains follow at residues 8–51 (DHES…KEND) and 55–98 (TVDN…NYET). The Smr domain maps to 347-443 (LDFHGFLPSE…YFRIEGKKKK (97 aa)).

Functionally, mRNA endonuclease involved in the No-Go Decay (NGD) pathway, which catalyzes mRNA cleavage and degradation in response to ribosome collisions. Acts downstream of the ribosome collision sensor HEL2. Specifically recognizes and binds RPS7/eS7 polyubiquitinated by MOT2/NOT4 and HEL2, promoting CUE2 recruitment to stalled ribosomes, where it mediates mRNA cleavage upstream of the colliding ribosome. Also mediates mRNA cleavage within colliding ribosomes: recruited to colliding ribosomes downstream of the RQT (ribosome quality control trigger) complex following disassembly of stalled ribosomes and cleaves mRNAs partially released from the colliding ribosome. This Saccharomyces cerevisiae (strain ATCC 204508 / S288c) (Baker's yeast) protein is Endonuclease CUE2.